We begin with the raw amino-acid sequence, 535 residues long: Tetrathionate hydrolase (535 aa).

Positions 1–39 (MNLKILVGLFILGIIILSAMTFLNFTTIVAQDKGDQQPK) are cleaved as a signal peptide. A glycan (N-linked (GlcNAc...) asparagine) is linked at Asn-50.

Belongs to the tetrathionate hydrolase family. As to quaternary structure, monomer and homodimer; in equilibrium.

It is found in the cell surface. The catalysed reaction is tetrathionate + H2O = sulfur + thiosulfate + sulfate + H(+). In terms of biological role, catalyzes the hydrolysis of tetrathionate to generate elemental sulfur, thiosulfate and sulfate. The chain is Tetrathionate hydrolase from Acidianus ambivalens (Desulfurolobus ambivalens).